We begin with the raw amino-acid sequence, 365 residues long: Probable receptor-like protein kinase At2g47060 (365 aa).

Residues 18-48 (DYGGRHNQAKHFPPGNDARHHQASETAQKGP) form a disordered region. A Protein kinase domain is found at 73–353 (FGSNSLIGEG…IVVKALQPLL (281 aa)). ATP-binding positions include 79-87 (IGEGSYGRV) and Lys-101. Tyr-145 carries the phosphotyrosine modification. The active-site Proton acceptor is Asp-203. 2 positions are modified to phosphoserine: Ser-207 and Ser-237. Residues Thr-238 and Thr-243 each carry the phosphothreonine modification. A Phosphotyrosine modification is found at Tyr-251.

It belongs to the protein kinase superfamily. Ser/Thr protein kinase family.

The enzyme catalyses L-seryl-[protein] + ATP = O-phospho-L-seryl-[protein] + ADP + H(+). The catalysed reaction is L-threonyl-[protein] + ATP = O-phospho-L-threonyl-[protein] + ADP + H(+). The chain is Probable receptor-like protein kinase At2g47060 from Arabidopsis thaliana (Mouse-ear cress).